The primary structure comprises 1339 residues: MAAAGARLSPGPGSGLRGRPRLCFHPGPPPLLPLLLLFLLLLPPPPLLAGATAAASREPDSPCRLKTVTVSTLPALRESDIGWSGARAGAGAGTGAGAAAAAASPGSPGSAGTAAESRLLLFVRNELPGRIAVQDDLDNTELPFFTLEMSGTAADISLVHWRQQWLENGTLYFHVSMSSSGQLAQATAPTLQEPSEIVEEQMHILHISVMGGLIALLLLLLVFTVALYAQRRWQKRRRIPQKSASTEATHEIHYIPSVLLGPQARESFRSSRLQTHNSVIGVPIRETPILDDYDCEEDEEPPRRANHVSREDEFGSQVTHTLDSLGHPGEEKVDFEKKAAAEATQETVESLMQKFKESFRANTPIEIGQLQPPLRSTSAGKRKRRSKSRGGISFGRAKGTSGSEADDETQLTFYTEQYRSRRRSKGLLKSPVNKTALTLIAVSSCILAMVCGSQMSCPLTVKVTLHVPEHFIADGSSFVVSEGSYLDISDWLNPAKLSLYYQINATSPWVRDLCGQRTTDACEQLCDPETGECSCHEGYAPDPVHRHLCVRSDWGQSEGPWPYTTLERGYDLVTGEQAPEKILRSTFSLGQGLWLPVSKSFVVPPVELSINPLASCKTDVLVTEDPADVREEAMLSTYFETINDLLSSFGPVRDCSRNNGGCTRNFKCVSDRQVDSSGCVCPEELKPMKDGSGCYDHSKGIDCSDGFNGGCEQLCLQQTLPLPYDATSSTIFMFCGCVEEYKLAPDGKSCLMLSDVCEGPKCLKPDSKFNDTLFGEMLHGYNNRTQHVNQGQVFQMTFRENNFIKDFPQLADGLLVIPLPVEEQCRGVLSEPLPDLQLLTGDIRYDEAMGYPMVQQWRVRSNLYRVKLSTITLAAGFTNVLKILTKESSREELLSFIQHYGSHYIAEALYGSELTCIIHFPSKKVQQQLWLQYQKETTELGSKKELKSMPFITYLSGLLTAQMLSDDQLISGVEIRCEEKGRCPSTCHLCRRPGKEQLSPTPVLLEINRVVPLYTLIQDNGTKEAFKSALMSSYWCSGKGDVIDDWCRCDLSAFDANGLPNCSPLLQPVLRLSPTVEPSSTVVSLEWVDVQPAIGTKVSDYILQHKKVDEYTDTDLYTGEFLSFADDLLSGLGTSCVAAGRSHGEVPEVSIYSVIFKCLEPDGLYKFTLYAVDTRGRHSELSTVTLRTACPLVDDNKAEEIADKIYNLYNGYTSGKEQQMAYNTLMEVSASMLFRVQHHYNSHYEKFGDFVWRSEDELGPRKAHLILRRLERVSSHCSSLLRSAYIQSRVETVPYLFCRSEEVRPAGMVWYSILKDTKITCEEKMVSMARNTYGESKGR.

Positions 1–49 (MAAAGARLSPGPGSGLRGRPRLCFHPGPPPLLPLLLLFLLLLPPPPLLA) are cleaved as a signal peptide. The Lumenal segment spans residues 50-206 (GATAAASREP…IVEEQMHILH (157 aa)). An N-linked (GlcNAc...) asparagine glycan is attached at Asn168. Residues 207-227 (ISVMGGLIALLLLLLVFTVAL) form a helical membrane-spanning segment. Residues 228-434 (YAQRRWQKRR…KGLLKSPVNK (207 aa)) lie on the Cytoplasmic side of the membrane. 2 disordered regions span residues 296–316 (EEDE…EFGS) and 363–408 (TPIE…ADDE). A helical membrane pass occupies residues 435 to 455 (TALTLIAVSSCILAMVCGSQM). At 456–1339 (SCPLTVKVTL…RNTYGESKGR (884 aa)) the chain is on the lumenal side. 3 consecutive EGF-like domains span residues 510-550 (VRDL…HLCV), 651-695 (PVRD…SGCY), and 699-751 (KGID…KSCL). Cystine bridges form between Cys514-Cys526, Cys522-Cys533, Cys535-Cys549, Cys655-Cys668, Cys662-Cys679, Cys681-Cys694, Cys703-Cys715, Cys711-Cys735, and Cys737-Cys750. Residues Asn770 and Asn783 are each glycosylated (N-linked (GlcNAc...) asparagine). 3 disulfide bridges follow: Cys825–Cys987, Cys916–Cys977, and Cys983–Cys990. Residue Asn1020 is glycosylated (N-linked (GlcNAc...) asparagine). Disulfide bonds link Cys1036/Cys1047, Cys1049/Cys1062, Cys1136/Cys1158, Cys1190/Cys1277, and Cys1298/Cys1321. A Fibronectin type-III domain is found at 1065 to 1188 (LLQPVLRLSP…SELSTVTLRT (124 aa)).

It belongs to the astrotactin family. As to quaternary structure, interacts with ASTN1; the interaction is not calcium-dependent.

The protein resides in the membrane. The protein localises to the perikaryon. It localises to the cytoplasm. It is found in the cell cortex. Its subcellular location is the early endosome. The protein resides in the late endosome. The protein localises to the cytoplasmic vesicle. It localises to the clathrin-coated vesicle. Mediates recycling of the neuronal cell adhesion molecule ASTN1 to the anterior pole of the cell membrane in migrating neurons. Promotes ASTN1 internalization and intracellular transport of endocytosed ASTN1. Selectively binds inositol-4,5-bisphosphate, inositol-3,4,5-trisphosphate and inositol-1,3,4,5-tetrakisphosphate, suggesting it is recruited to membranes that contain lipids with a phosphoinositide headgroup. This Homo sapiens (Human) protein is Astrotactin-2 (ASTN2).